Consider the following 157-residue polypeptide: Endoribonuclease YbeY (157 aa).

Histidine 114, histidine 118, and histidine 124 together coordinate Zn(2+).

It belongs to the endoribonuclease YbeY family. Zn(2+) serves as cofactor.

The protein localises to the cytoplasm. Single strand-specific metallo-endoribonuclease involved in late-stage 70S ribosome quality control and in maturation of the 3' terminus of the 16S rRNA. This chain is Endoribonuclease YbeY, found in Yersinia enterocolitica serotype O:8 / biotype 1B (strain NCTC 13174 / 8081).